The primary structure comprises 191 residues: uncharacterized protein (191 aa).

5 helical membrane-spanning segments follow: residues 24–44, 51–71, 114–134, 139–159, and 167–187; these read IVRG…GASG, IIAA…LGAF, LIDG…FFLF, ALYV…VFIG, and IISG…CFMI.

It localises to the cell membrane. This is an uncharacterized protein from Methanocaldococcus jannaschii (strain ATCC 43067 / DSM 2661 / JAL-1 / JCM 10045 / NBRC 100440) (Methanococcus jannaschii).